A 115-amino-acid polypeptide reads, in one-letter code: Large ribosomal subunit protein bL19 (115 aa).

It belongs to the bacterial ribosomal protein bL19 family.

In terms of biological role, this protein is located at the 30S-50S ribosomal subunit interface and may play a role in the structure and function of the aminoacyl-tRNA binding site. This is Large ribosomal subunit protein bL19 from Lachnospira eligens (strain ATCC 27750 / DSM 3376 / VPI C15-48 / C15-B4) (Eubacterium eligens).